A 130-amino-acid chain; its full sequence is Inner membrane protein YqjF (130 aa).

Residues 1–5 are Cytoplasmic-facing; that stretch reads MKKLE. The helical transmembrane segment at 6–26 threads the bilayer; that stretch reads DVGVLVARILMPILFITAGWG. Residues 27 to 45 lie on the Periplasmic side of the membrane; that stretch reads KITGYAGTQQYMEAMGVPG. Residues 46-66 form a helical membrane-spanning segment; sequence FMLPLVILLEFGGGLAILFGF. Residues 67 to 70 lie on the Cytoplasmic side of the membrane; it reads LTRT. The chain crosses the membrane as a helical span at residues 71 to 91; it reads TALFTAGFTLLTAFLFHSNFA. Over 92 to 101 the chain is Periplasmic; sequence EGVNSLMFMK. A helical transmembrane segment spans residues 102–122; sequence NLTISGGFLLLAITGPGAYSI. Over 123–130 the chain is Cytoplasmic; that stretch reads DRLLNKKW.

It belongs to the DoxX family.

The protein localises to the cell inner membrane. This Escherichia coli (strain K12) protein is Inner membrane protein YqjF (yqjF).